A 208-amino-acid polypeptide reads, in one-letter code: Thiamine-phosphate synthase (208 aa).

4-amino-2-methyl-5-(diphosphooxymethyl)pyrimidine is bound by residues 37–39 (QVR) and N70. Residues D71 and D90 each coordinate Mg(2+). T109 is a binding site for 4-amino-2-methyl-5-(diphosphooxymethyl)pyrimidine. 135-137 (TTS) serves as a coordination point for 2-[(2R,5Z)-2-carboxy-4-methylthiazol-5(2H)-ylidene]ethyl phosphate. K138 is a binding site for 4-amino-2-methyl-5-(diphosphooxymethyl)pyrimidine. A166 serves as a coordination point for 2-[(2R,5Z)-2-carboxy-4-methylthiazol-5(2H)-ylidene]ethyl phosphate.

Belongs to the thiamine-phosphate synthase family. Mg(2+) serves as cofactor.

It catalyses the reaction 2-[(2R,5Z)-2-carboxy-4-methylthiazol-5(2H)-ylidene]ethyl phosphate + 4-amino-2-methyl-5-(diphosphooxymethyl)pyrimidine + 2 H(+) = thiamine phosphate + CO2 + diphosphate. The catalysed reaction is 2-(2-carboxy-4-methylthiazol-5-yl)ethyl phosphate + 4-amino-2-methyl-5-(diphosphooxymethyl)pyrimidine + 2 H(+) = thiamine phosphate + CO2 + diphosphate. The enzyme catalyses 4-methyl-5-(2-phosphooxyethyl)-thiazole + 4-amino-2-methyl-5-(diphosphooxymethyl)pyrimidine + H(+) = thiamine phosphate + diphosphate. It functions in the pathway cofactor biosynthesis; thiamine diphosphate biosynthesis; thiamine phosphate from 4-amino-2-methyl-5-diphosphomethylpyrimidine and 4-methyl-5-(2-phosphoethyl)-thiazole: step 1/1. In terms of biological role, condenses 4-methyl-5-(beta-hydroxyethyl)thiazole monophosphate (THZ-P) and 2-methyl-4-amino-5-hydroxymethyl pyrimidine pyrophosphate (HMP-PP) to form thiamine monophosphate (TMP). This chain is Thiamine-phosphate synthase, found in Salinispora tropica (strain ATCC BAA-916 / DSM 44818 / JCM 13857 / NBRC 105044 / CNB-440).